We begin with the raw amino-acid sequence, 476 residues long: Probable cytosolic Fe-S cluster assembly factor GF22738 (476 aa).

Residues Cys-23, Cys-68, Cys-71, Cys-74, Cys-187, Cys-243, Cys-395, and Cys-399 each coordinate [4Fe-4S] cluster.

This sequence belongs to the NARF family.

Functionally, component of the cytosolic iron-sulfur (Fe/S) protein assembly machinery. Required for maturation of extramitochondrial Fe/S proteins. This is Probable cytosolic Fe-S cluster assembly factor GF22738 from Drosophila ananassae (Fruit fly).